A 199-amino-acid chain; its full sequence is MACVCKAHVGKPAPEFQATAVVDGAFKEVKLSDYKGKYVVLFFYPLDFTFVCPTEIVAFSDRAAEFHKLNCEVLGVSVDSQFTHLAWINTPRKEGGLGPLNIPLLADVTRKLSSDYGVLKEDEGIAYRGLFVIDGKGVLRQVTINDLPVGRSVDEALRLVQAFQYTDEHGEVCPAGWTPGSDTIKPNVDDSKEYFSKHN.

The 159-residue stretch at 7–165 (AHVGKPAPEF…ALRLVQAFQY (159 aa)) folds into the Thioredoxin domain. Catalysis depends on C52, which acts as the Cysteine sulfenic acid (-SOH) intermediate. S113 is modified (phosphoserine). Position 183 is a phosphothreonine (T183). Position 197 is an N6-acetyllysine (K197).

This sequence belongs to the peroxiredoxin family. AhpC/Prx1 subfamily. Homodimer; disulfide-linked, upon oxidation. 5 homodimers assemble to form a ring-like decamer. Interacts with TIPIN. Post-translationally, the enzyme can be inactivated by further oxidation of the cysteine sulfenic acid (C(P)-SOH) to sulphinic acid (C(P)-SO2H) instead of its condensation to a disulfide bond. It can be reactivated by forming a transient disulfide bond with sulfiredoxin SRXN1, which reduces the cysteine sulfinic acid in an ATP- and Mg-dependent manner. Acetylation increases resistance to transition to high molecular-mass complexes. Deacetylated by HDAC6 which decreases reducing activity.

It localises to the cytoplasm. It carries out the reaction a hydroperoxide + [thioredoxin]-dithiol = an alcohol + [thioredoxin]-disulfide + H2O. Its function is as follows. Thiol-specific peroxidase that catalyzes the reduction of hydrogen peroxide and organic hydroperoxides to water and alcohols, respectively. Plays a role in cell protection against oxidative stress by detoxifying peroxides and as sensor of hydrogen peroxide-mediated signaling events. Might participate in the signaling cascades of growth factors and tumor necrosis factor-alpha by regulating the intracellular concentrations of H(2)O(2). The protein is Peroxiredoxin-2 (PRDX2) of Bos taurus (Bovine).